Here is a 214-residue protein sequence, read N- to C-terminus: EEF1A lysine methyltransferase 1 (214 aa).

The residue at position 2 (Ser2) is an N-acetylserine. Ser2 is subject to Phosphoserine.

This sequence belongs to the class I-like SAM-binding methyltransferase superfamily. EFM5 family.

The protein resides in the cytoplasm. The enzyme catalyses L-lysyl-[protein] + 3 S-adenosyl-L-methionine = N(6),N(6),N(6)-trimethyl-L-lysyl-[protein] + 3 S-adenosyl-L-homocysteine + 3 H(+). Protein N-lysine methyltransferase that selectively catalyzes the trimethylation of EEF1A at 'Lys-79'. In Homo sapiens (Human), this protein is EEF1A lysine methyltransferase 1.